Consider the following 484-residue polypeptide: Cobyric acid synthase (484 aa).

The GATase cobBQ-type domain occupies 248-435 (VLKVIVPVLP…LHGLFEGSQS (188 aa)). The Nucleophile role is filled by Cys329. His427 is an active-site residue.

Belongs to the CobB/CobQ family. CobQ subfamily.

It functions in the pathway cofactor biosynthesis; adenosylcobalamin biosynthesis. In terms of biological role, catalyzes amidations at positions B, D, E, and G on adenosylcobyrinic A,C-diamide. NH(2) groups are provided by glutamine, and one molecule of ATP is hydrogenolyzed for each amidation. The sequence is that of Cobyric acid synthase from Pseudomonas putida (strain ATCC 700007 / DSM 6899 / JCM 31910 / BCRC 17059 / LMG 24140 / F1).